The chain runs to 1792 residues: MNSIKLKFNCKDSLWQEHIGAGDFSFAAIFLTTWGIVLRAYLDTDDVFFEYGLSRCEPVSQRDGIDELVPDRPFNLKFDGSMTVKDTIRRADSVVYGTPLVQDGLEHETHRETDPKRETFYSTCMLFLDGPKSPIDADVVEGTILDDIEFEMKPVVNYDMVVYVLSGKVCYLSYNVTRVSDDQAAHVAATFETVAKCIADVPHRLVQEVESLSQLDVDRLKTWNAYQPIAVETCYQDLFRQRCDLHPNSPAVIAWDGSFTYDELDHFSSLLATRLQAAGIGPDVFVTICATRCRWIPVAMLGIIKARGAFCALDLSHPLDRLKDICDALKSTITITTPTDSNIARKLASTVIVIGGDAPVESDRITPMNDRPKPINGHPTNALYSVFTSGSSGKPKGVVVEHRSFVSSALASIQPLDIRPHDRVLHFSAYAFDISVFEVLTPLISGATIAIPSEKRRKESLTHAVQELGATWALLTPTVARLYDPDEFPSLRTLALGGELAQASDIALWQSKNVVVIYNPAECCPIGVSGPACPADGKFLGWSHTCQRAWIVDPRDHDKLPPIGAVGELLIEGPVVARCYAHDPNFSSPDSPFIQSTPSWMLRLRSNTPSGTRLYRTGDLARYGSDASLYYMGRKDSQIKIRGQRTEPGEIESNLHSILSKDKLGVAIVVLELRGSSKIIAFVSKDTGGLGGDSNTVGQLRIEAATEETDVCITKATSKLHSIMPAYMVPSAFLSVNYIPISRSGKIDRTRLKSFALSLPQETLLRVNNGLETGDLPESNEEHRLQRMYSLVLGISRDKVGMESDFFRLGGDSLQAMKLLALAPKEGLTDISYEDIFRYPRLKDLARKASQSVTIKKDGFGENSSVIHPFSLVIDGQSLIDMAAKQCDIERDSIEDIYPCTPMQASIISLAVKGKIMPFLTFGLALRDHVDTKRVKDTWHAAYRANSLLRTRIIVCAETGQLYQVVVGGDIFWDDDECGNFAQPKSGPSASIGGPLVRMKLVEGQLSIAIHRALYDNWSIRQLLNDISGAYNGLTLPSRPSFNCYVSYAARSLEAASSFCNAELGDSDLDAAKYPEPVSQNSHTNFRAWLGIRVFTCQKESIDVLASEFQLAWAMIAYARTNKKDVVFGVLSSGRSNASKDTKEIMGPIATVTPLRVTIDGTQDVGGALEELQYRQEEQAMYTHLGLRRIGQLGRNAAAACQIQTVLIVEPDLPDLRGVWFSNDATLPNHSDADASNYRLTIKCVVGPDCTDIFAIFDHQSLPIMEVKEILSQFEHILGQIHGKEASQLSVASIDTVNFKDWDTLHKLTEMPSVCRNGLLLSDPTILPQGQMKTFSAVEEAAAHCAFQDSLQEASIARDAKMQPKEPLSSADLISEINRYDLAIMRSRPSPESILLSELALTGDSHSSGTHTVFVTGANGFIGTQILRHCLEDPTIDRVIALVRGSSANEARSRTEESARRAQWWSDCHSQKLEVWPGDLAMPHLGLNETHWRRLADRTTINAIIHNGASVHWLKRYADLEATNVGATAQLLQLAVANPRLGFVYVSSGRYTDPNAESEEPAAANVAATAMPYSQTKFVAESLIRRTAARLPHGQTQVRIISLGLVIGDPLTGVVNADDYLWRLIATCVQAGEFNSSAGSEWMPISDVTSTALAIVQTALNPAGVPATIKPITGGLMWSEIWDLVTDMGYDMEPRPESEWMATVRRDLEREQERHPLWTLSHLVESRSQLNTDAGAGPAWADAWRGDEATTRNLKTAFRRSLRFLGEVGFLPGQKGQNTDGEVNGRAFTRAW.

Residues 239 to 642 (FRQRCDLHPN…GRKDSQIKIR (404 aa)) are adenylation (A) domain. In terms of domain architecture, Carrier spans 779–853 (SNEEHRLQRM…DLARKASQSV (75 aa)). An O-(pantetheine 4'-phosphoryl)serine modification is found at Ser-813. The tract at residues 895 to 1285 (EDIYPCTPMQ…HILGQIHGKE (391 aa)) is condensation (C) domain. The interval 1415–1640 (VTGANGFIGT…AGEFNSSAGS (226 aa)) is reductase (R) domain.

The protein belongs to the NRP synthetase family.

Its pathway is alkaloid biosynthesis; ergot alkaloid biosynthesis. In terms of biological role, D-lysergyl-peptide-synthetase subunit 3; part of the gene cluster that mediates the biosynthesis of fungal ergot alkaloid. DmaW catalyzes the first step of ergot alkaloid biosynthesis by condensing dimethylallyl diphosphate (DMAP) and tryptophan to form 4-dimethylallyl-L-tryptophan. The second step is catalyzed by the methyltransferase easF that methylates 4-dimethylallyl-L-tryptophan in the presence of S-adenosyl-L-methionine, resulting in the formation of 4-dimethylallyl-L-abrine. The catalase easC and the FAD-dependent oxidoreductase easE then transform 4-dimethylallyl-L-abrine to chanoclavine-I which is further oxidized by easD in the presence of NAD(+), resulting in the formation of chanoclavine-I aldehyde. Agroclavine dehydrogenase easG then mediates the conversion of chanoclavine-I aldehyde to agroclavine via a non-enzymatic adduct reaction: the substrate is an iminium intermediate that is formed spontaneously from chanoclavine-I aldehyde in the presence of glutathione. The presence of easA is not required to complete this reaction. Further conversion of agroclavine to paspalic acid is a two-step process involving oxidation of agroclavine to elymoclavine and of elymoclavine to paspalic acid, the second step being performed by the elymoclavine oxidase cloA. Paspalic acid is then further converted to D-lysergic acid. Ergopeptines are assembled from D-lysergic acid and three different amino acids by the D-lysergyl-peptide-synthetases composed each of a monomudular and a trimodular nonribosomal peptide synthetase subunit. LpsB and lpsC encode the monomodular subunits responsible for D-lysergic acid activation and incorporation into the ergopeptine backbone. LpsA1 and A2 subunits encode the trimodular nonribosomal peptide synthetase assembling the tripeptide portion of ergopeptines. LpsA1 is responsible for formation of the major ergopeptine, ergotamine, and lpsA2 for alpha-ergocryptine, the minor ergopeptine of the total alkaloid mixture elaborated by C.purpurea. D-lysergyl-tripeptides are assembled by the nonribosomal peptide synthetases and released as N-(D-lysergyl-aminoacyl)-lactams. Cyclolization of the D-lysergyl-tripeptides is performed by the Fe(2+)/2-ketoglutarate-dependent dioxygenase easH which introduces a hydroxyl group into N-(D-lysergyl-aminoacyl)-lactam at alpha-C of the aminoacyl residue followed by spontaneous condensation with the terminal lactam carbonyl group. The polypeptide is D-lysergyl-peptide-synthetase subunit 3 (Claviceps purpurea (strain 20.1) (Ergot fungus)).